The primary structure comprises 291 residues: tRNA pseudouridine synthase-like 1 (291 aa).

Asp-66 acts as the Nucleophile in catalysis. Tyr-130 provides a ligand contact to substrate.

Belongs to the tRNA pseudouridine synthase TruA family.

It carries out the reaction a uridine in tRNA = a pseudouridine in tRNA. This is tRNA pseudouridine synthase-like 1 (Pusl1) from Mus musculus (Mouse).